A 583-amino-acid polypeptide reads, in one-letter code: Protein disulfide-isomerase-like protein of the testis (583 aa).

The signal sequence occupies residues 1–17; the sequence is MDLLWMPLLLVAARISA. Residues N58, N128, N160, and N340 are each glycosylated (N-linked (GlcNAc...) asparagine). Residues 388–451 enclose the Thioredoxin domain; the sequence is LVKQLVGKNF…IAKIDITAND (64 aa). Basic and acidic residues-rich tracts occupy residues 522 to 531 and 540 to 559; these read EVPMMKKELP and NVTK…KTSE. Positions 522-583 are disordered; that stretch reads EVPMMKKELP…KKKPKVKEEL (62 aa). The N-linked (GlcNAc...) asparagine glycan is linked to N540. Residues 573–583 are compositionally biased toward basic residues; it reads QKKKPKVKEEL. Positions 580-583 match the Prevents secretion from ER motif; the sequence is KEEL.

The protein belongs to the protein disulfide isomerase family. Homodimer. The homodimer is not disulfide-linked. Interacts with ERO1A and CLGN. N-glycosylated.

The protein localises to the endoplasmic reticulum. Its function is as follows. Probable redox-inactive chaperone involved in spermatogenesis. The protein is Protein disulfide-isomerase-like protein of the testis (PDILT) of Macaca fascicularis (Crab-eating macaque).